Here is a 332-residue protein sequence, read N- to C-terminus: Probable cation efflux system protein MT2084 (332 aa).

5 helical membrane-spanning segments follow: residues 46-66 (ISLL…VMSG), 75-95 (IHNF…ALGA), 113-133 (AGSF…YEAI), 145-165 (VGWV…VALY), and 202-222 (VALG…AAIL).

This sequence belongs to the cation diffusion facilitator (CDF) transporter (TC 2.A.4) family.

The protein resides in the cell membrane. The protein is Probable cation efflux system protein MT2084 of Mycobacterium tuberculosis (strain CDC 1551 / Oshkosh).